We begin with the raw amino-acid sequence, 444 residues long: Methylenetetrahydrofolate--tRNA-(uracil-5-)-methyltransferase TrmFO (444 aa).

FAD is bound at residue 9–14 (GAGMAG).

It belongs to the MnmG family. TrmFO subfamily. The cofactor is FAD.

It localises to the cytoplasm. The catalysed reaction is uridine(54) in tRNA + (6R)-5,10-methylene-5,6,7,8-tetrahydrofolate + NADH + H(+) = 5-methyluridine(54) in tRNA + (6S)-5,6,7,8-tetrahydrofolate + NAD(+). The enzyme catalyses uridine(54) in tRNA + (6R)-5,10-methylene-5,6,7,8-tetrahydrofolate + NADPH + H(+) = 5-methyluridine(54) in tRNA + (6S)-5,6,7,8-tetrahydrofolate + NADP(+). Functionally, catalyzes the folate-dependent formation of 5-methyl-uridine at position 54 (M-5-U54) in all tRNAs. The protein is Methylenetetrahydrofolate--tRNA-(uracil-5-)-methyltransferase TrmFO of Cereibacter sphaeroides (strain ATCC 17025 / ATH 2.4.3) (Rhodobacter sphaeroides).